The chain runs to 478 residues: Cysteine--tRNA ligase (478 aa).

Cys-27 lines the Zn(2+) pocket. The short motif at 29-39 (PTTYNFIHLGN) is the 'HIGH' region element. Residues Cys-207, His-232, and Glu-236 each coordinate Zn(2+). A 'KMSKS' region motif is present at residues 264–268 (KMSKS). Lys-267 is a binding site for ATP.

Belongs to the class-I aminoacyl-tRNA synthetase family. As to quaternary structure, monomer. The cofactor is Zn(2+).

It is found in the cytoplasm. It carries out the reaction tRNA(Cys) + L-cysteine + ATP = L-cysteinyl-tRNA(Cys) + AMP + diphosphate. This Desulforudis audaxviator (strain MP104C) protein is Cysteine--tRNA ligase.